The sequence spans 505 residues: Flagellin (505 aa).

The protein belongs to the bacterial flagellin family.

The protein resides in the secreted. It localises to the bacterial flagellum. Flagellin is the subunit protein which polymerizes to form the filaments of bacterial flagella. In Salmonella enteritidis, this protein is Flagellin (fliC).